Here is an 84-residue protein sequence, read N- to C-terminus: Beta-toxin Tf1a (84 aa).

The N-terminal stretch at 1-20 (MKGMILFISCLLLIGIVVEC) is a signal peptide. Positions 21–82 (KEGYLMDHEG…VWERATNRCG (62 aa)) constitute an LCN-type CS-alpha/beta domain. Intrachain disulfides connect cysteine 31–cysteine 81, cysteine 35–cysteine 57, cysteine 43–cysteine 62, and cysteine 47–cysteine 64. A Cysteine amide modification is found at cysteine 81.

This sequence belongs to the long (4 C-C) scorpion toxin superfamily. Sodium channel inhibitor family. Beta subfamily. In terms of tissue distribution, expressed by the venom gland.

The protein resides in the secreted. In terms of biological role, beta toxins bind voltage-independently at site-4 of sodium channels (Nav) and shift the voltage of activation toward more negative potentials thereby affecting sodium channel activation and promoting spontaneous and repetitive firing. The toxin induces a leftward shift, on all channels tested (including Blattella germanica and Varroa destructor Nav1), displacing a change in voltage dependence activation to more hyperpolarized potentials. In addition, the toxin mostly inhibits peak current of hNav1.4/SCN4A (53% inhibition of peak current at 100 nM) and hNav1.5/SCN5A (71% inhibition). This chain is Beta-toxin Tf1a, found in Tityus fasciolatus (Central Brazilian scorpion).